The chain runs to 434 residues: Histidinol dehydrogenase (434 aa).

The substrate site is built by S242, Q264, and H267. Zn(2+) is bound by residues Q264 and H267. Residues E332 and H333 each act as proton acceptor in the active site. Positions 333, 366, 420, and 425 each coordinate substrate. A Zn(2+)-binding site is contributed by D366. H425 contacts Zn(2+).

Belongs to the histidinol dehydrogenase family. Zn(2+) is required as a cofactor.

The enzyme catalyses L-histidinol + 2 NAD(+) + H2O = L-histidine + 2 NADH + 3 H(+). Its pathway is amino-acid biosynthesis; L-histidine biosynthesis; L-histidine from 5-phospho-alpha-D-ribose 1-diphosphate: step 9/9. Functionally, catalyzes the sequential NAD-dependent oxidations of L-histidinol to L-histidinaldehyde and then to L-histidine. In Desulfotalea psychrophila (strain LSv54 / DSM 12343), this protein is Histidinol dehydrogenase.